The chain runs to 47 residues: Diuretic hormone 2 (47 aa).

This sequence belongs to the sauvagine/corticotropin-releasing factor/urotensin I family.

The protein localises to the secreted. Functionally, stimulates fluid secretion by the Malpighian tubules. Increases cyclic AMP production in Malpighian tubules. The polypeptide is Diuretic hormone 2 (Tenebrio molitor (Yellow mealworm beetle)).